A 388-amino-acid chain; its full sequence is tRNA-specific adenosine deaminase 1 (388 aa).

An A to I editase domain is found at 63–388; sequence CLATGVKCTP…PNGGNEFQWI (326 aa). Position 89 (His89) interacts with Zn(2+). The active-site Proton donor is the Glu91. Arg96 serves as a coordination point for 1D-myo-inositol hexakisphosphate. Positions 144 and 201 each coordinate Zn(2+). 1D-myo-inositol hexakisphosphate is bound by residues Lys204, Lys357, and Arg363.

It belongs to the ADAT1 family. 1D-myo-inositol hexakisphosphate serves as cofactor. The cofactor is Zn(2+).

The protein localises to the cytoplasm. It is found in the nucleus. It catalyses the reaction adenosine(37) in tRNA(Ala) + H2O + H(+) = inosine(37) in tRNA(Ala) + NH4(+). Functionally, deaminates adenosine-37 to inosine in tRNA-Ala. The polypeptide is tRNA-specific adenosine deaminase 1 (Schizosaccharomyces pombe (strain 972 / ATCC 24843) (Fission yeast)).